Reading from the N-terminus, the 143-residue chain is Transcriptional regulator MraZ (143 aa).

SpoVT-AbrB domains are found at residues 5 to 47 and 76 to 119; these read EYHH…PMQG and ATEC…SRSR.

Belongs to the MraZ family. As to quaternary structure, forms oligomers.

The protein resides in the cytoplasm. It localises to the nucleoid. This chain is Transcriptional regulator MraZ, found in Moorella thermoacetica (strain ATCC 39073 / JCM 9320).